The primary structure comprises 135 residues: Ribosome-binding factor A (135 aa).

It belongs to the RbfA family. As to quaternary structure, monomer. Binds 30S ribosomal subunits, but not 50S ribosomal subunits or 70S ribosomes.

It is found in the cytoplasm. Functionally, one of several proteins that assist in the late maturation steps of the functional core of the 30S ribosomal subunit. Associates with free 30S ribosomal subunits (but not with 30S subunits that are part of 70S ribosomes or polysomes). Required for efficient processing of 16S rRNA. May interact with the 5'-terminal helix region of 16S rRNA. This is Ribosome-binding factor A from Bartonella henselae (strain ATCC 49882 / DSM 28221 / CCUG 30454 / Houston 1) (Rochalimaea henselae).